The following is a 438-amino-acid chain: Ribosomal protein uS12 methylthiotransferase RimO (438 aa).

An MTTase N-terminal domain is found at 5–116 (PTIAISHLGC…IVQVIQRVEN (112 aa)). [4Fe-4S] cluster contacts are provided by Cys14, Cys50, Cys79, Cys154, Cys158, and Cys161. In terms of domain architecture, Radical SAM core spans 140-369 (TTSEGVAYLR…MQIQQPISLQ (230 aa)). The region spanning 372–438 (CACIGDIVDV…IYDLYGEVIN (67 aa)) is the TRAM domain.

It belongs to the methylthiotransferase family. RimO subfamily. [4Fe-4S] cluster serves as cofactor.

It is found in the cytoplasm. The catalysed reaction is L-aspartate(89)-[ribosomal protein uS12]-hydrogen + (sulfur carrier)-SH + AH2 + 2 S-adenosyl-L-methionine = 3-methylsulfanyl-L-aspartate(89)-[ribosomal protein uS12]-hydrogen + (sulfur carrier)-H + 5'-deoxyadenosine + L-methionine + A + S-adenosyl-L-homocysteine + 2 H(+). Its function is as follows. Catalyzes the methylthiolation of an aspartic acid residue of ribosomal protein uS12. In Gloeothece citriformis (strain PCC 7424) (Cyanothece sp. (strain PCC 7424)), this protein is Ribosomal protein uS12 methylthiotransferase RimO.